A 146-amino-acid chain; its full sequence is Large ribosomal subunit protein uL13 (146 aa).

This sequence belongs to the universal ribosomal protein uL13 family. Part of the 50S ribosomal subunit.

Functionally, this protein is one of the early assembly proteins of the 50S ribosomal subunit, although it is not seen to bind rRNA by itself. It is important during the early stages of 50S assembly. The protein is Large ribosomal subunit protein uL13 of Borreliella burgdorferi (strain ATCC 35210 / DSM 4680 / CIP 102532 / B31) (Borrelia burgdorferi).